Reading from the N-terminus, the 372-residue chain is tRNA-specific 2-thiouridylase MnmA (372 aa).

Residues 16–23 (GMSGGVDS) and M42 contribute to the ATP site. An interaction with target base in tRNA region spans residues 102–104 (NPD). The active-site Nucleophile is C107. A disulfide bridge links C107 with C205. An ATP-binding site is contributed by G132. Positions 155-157 (KDQ) are interaction with tRNA. C205 serves as the catalytic Cysteine persulfide intermediate. The segment at 317–318 (RY) is interaction with tRNA.

The protein belongs to the MnmA/TRMU family.

The protein localises to the cytoplasm. The enzyme catalyses S-sulfanyl-L-cysteinyl-[protein] + uridine(34) in tRNA + AH2 + ATP = 2-thiouridine(34) in tRNA + L-cysteinyl-[protein] + A + AMP + diphosphate + H(+). Functionally, catalyzes the 2-thiolation of uridine at the wobble position (U34) of tRNA, leading to the formation of s(2)U34. The chain is tRNA-specific 2-thiouridylase MnmA from Shewanella denitrificans (strain OS217 / ATCC BAA-1090 / DSM 15013).